The sequence spans 242 residues: Biosynthetic peptidoglycan transglycosylase (242 aa).

The chain crosses the membrane as a helical span at residues 19–39 (ILAALAVFWGGGIALFSVVPV).

The protein belongs to the glycosyltransferase 51 family.

The protein localises to the cell inner membrane. It carries out the reaction [GlcNAc-(1-&gt;4)-Mur2Ac(oyl-L-Ala-gamma-D-Glu-L-Lys-D-Ala-D-Ala)](n)-di-trans,octa-cis-undecaprenyl diphosphate + beta-D-GlcNAc-(1-&gt;4)-Mur2Ac(oyl-L-Ala-gamma-D-Glu-L-Lys-D-Ala-D-Ala)-di-trans,octa-cis-undecaprenyl diphosphate = [GlcNAc-(1-&gt;4)-Mur2Ac(oyl-L-Ala-gamma-D-Glu-L-Lys-D-Ala-D-Ala)](n+1)-di-trans,octa-cis-undecaprenyl diphosphate + di-trans,octa-cis-undecaprenyl diphosphate + H(+). Its pathway is cell wall biogenesis; peptidoglycan biosynthesis. Its function is as follows. Peptidoglycan polymerase that catalyzes glycan chain elongation from lipid-linked precursors. The sequence is that of Biosynthetic peptidoglycan transglycosylase from Salmonella typhi.